A 128-amino-acid chain; its full sequence is UPF0102 protein BCG_2919c (128 aa).

The protein belongs to the UPF0102 family.

The chain is UPF0102 protein BCG_2919c from Mycobacterium bovis (strain BCG / Pasteur 1173P2).